We begin with the raw amino-acid sequence, 91 residues long: Large ribosomal subunit protein bL27 (91 aa).

Residues Met-1–Gly-13 show a composition bias toward polar residues. The tract at residues Met-1–Arg-20 is disordered.

Belongs to the bacterial ribosomal protein bL27 family.

The protein is Large ribosomal subunit protein bL27 of Anaplasma phagocytophilum (strain HZ).